Here is a 106-residue protein sequence, read N- to C-terminus: Met repressor (106 aa).

It belongs to the MetJ family. As to quaternary structure, homodimer.

The protein resides in the cytoplasm. In terms of biological role, this regulatory protein, when combined with SAM (S-adenosylmethionine) represses the expression of the methionine regulon and of enzymes involved in SAM synthesis. This chain is Met repressor, found in Vibrio campbellii (strain ATCC BAA-1116).